Here is a 279-residue protein sequence, read N- to C-terminus: Small ribosomal subunit protein uS9m (279 aa).

The protein belongs to the universal ribosomal protein uS9 family.

It localises to the mitochondrion. The protein is Small ribosomal subunit protein uS9m (MRPS9) of Eremothecium gossypii (strain ATCC 10895 / CBS 109.51 / FGSC 9923 / NRRL Y-1056) (Yeast).